Consider the following 201-residue polypeptide: Recombination protein RecR (201 aa).

Residues 59–74 (CSRCQNFCEAELCSIC) form a C4-type zinc finger. Residues 82–177 (RVLCVVESPT…PVSRIAHGIP (96 aa)) enclose the Toprim domain.

The protein belongs to the RecR family.

In terms of biological role, may play a role in DNA repair. It seems to be involved in an RecBC-independent recombinational process of DNA repair. It may act with RecF and RecO. The protein is Recombination protein RecR of Hahella chejuensis (strain KCTC 2396).